A 414-amino-acid polypeptide reads, in one-letter code: Succinylornithine transaminase (414 aa).

Lys-260 is subject to N6-(pyridoxal phosphate)lysine.

It belongs to the class-III pyridoxal-phosphate-dependent aminotransferase family. AstC subfamily. Pyridoxal 5'-phosphate is required as a cofactor.

The catalysed reaction is N(2)-succinyl-L-ornithine + 2-oxoglutarate = N-succinyl-L-glutamate 5-semialdehyde + L-glutamate. The protein operates within amino-acid degradation; L-arginine degradation via AST pathway; L-glutamate and succinate from L-arginine: step 3/5. In terms of biological role, catalyzes the transamination of N(2)-succinylornithine and alpha-ketoglutarate into N(2)-succinylglutamate semialdehyde and glutamate. Can also act as an acetylornithine aminotransferase. The polypeptide is Succinylornithine transaminase (Yersinia pseudotuberculosis serotype I (strain IP32953)).